The primary structure comprises 269 residues: Formamidopyrimidine-DNA glycosylase (269 aa).

The active-site Schiff-base intermediate with DNA is the P2. The active-site Proton donor is E3. K57 (proton donor; for beta-elimination activity) is an active-site residue. The DNA site is built by H90, R109, and K150. The segment at 235-269 (QVYGRKGEPCRVCGTPIVATKHAQRATFYCRHCQK) adopts an FPG-type zinc-finger fold. Residue R259 is the Proton donor; for delta-elimination activity of the active site.

It belongs to the FPG family. As to quaternary structure, monomer. Requires Zn(2+) as cofactor.

The enzyme catalyses Hydrolysis of DNA containing ring-opened 7-methylguanine residues, releasing 2,6-diamino-4-hydroxy-5-(N-methyl)formamidopyrimidine.. The catalysed reaction is 2'-deoxyribonucleotide-(2'-deoxyribose 5'-phosphate)-2'-deoxyribonucleotide-DNA = a 3'-end 2'-deoxyribonucleotide-(2,3-dehydro-2,3-deoxyribose 5'-phosphate)-DNA + a 5'-end 5'-phospho-2'-deoxyribonucleoside-DNA + H(+). In terms of biological role, involved in base excision repair of DNA damaged by oxidation or by mutagenic agents. Acts as a DNA glycosylase that recognizes and removes damaged bases. Has a preference for oxidized purines, such as 7,8-dihydro-8-oxoguanine (8-oxoG). Has AP (apurinic/apyrimidinic) lyase activity and introduces nicks in the DNA strand. Cleaves the DNA backbone by beta-delta elimination to generate a single-strand break at the site of the removed base with both 3'- and 5'-phosphates. The polypeptide is Formamidopyrimidine-DNA glycosylase (Salmonella paratyphi C (strain RKS4594)).